The primary structure comprises 1408 residues: TSET complex member tstA (1408 aa).

3 disordered regions span residues F259–A347, Q998–S1055, and S1091–N1139. The segment covering N266–N308 has biased composition (low complexity). The segment covering L309–L318 has biased composition (polar residues). 2 stretches are compositionally biased toward low complexity: residues S319–A347 and Q998–S1051.

The protein belongs to the TPLATE family. As to quaternary structure, component of the TSET complex, a heterohexamer composed of tstA, tstB, tstC, tstD, tstE and tstF, which may act in plasma membrane turnover. tstA, tstB, tstC and tstD are likely to be the core complex members with tstE and tstF acting as associated scaffold proteins.

In Dictyostelium discoideum (Social amoeba), this protein is TSET complex member tstA.